The sequence spans 520 residues: Tubby-related protein 2 (520 aa).

Phosphoserine is present on residues S135 and S190. The disordered stretch occupies residues 141–236 (EVSVENGSVS…GTNSSAAHNE (96 aa)). Basic and acidic residues predominate over residues 211-223 (QKEEDLEKKREAS). Positions 224-233 (ESTGTNSSAA) are enriched in polar residues.

The protein belongs to the TUB family. As to expression, strongly expressed in testis. Also expressed in retina. Expressed in cancer cell lines.

The protein localises to the cytoplasm. Its subcellular location is the secreted. This chain is Tubby-related protein 2 (TULP2), found in Homo sapiens (Human).